Consider the following 179-residue polypeptide: Bifunctional protein PyrR (179 aa).

The short motif at 97–109 (IILTDDVLYTGRT) is the PRPP-binding element.

The protein belongs to the purine/pyrimidine phosphoribosyltransferase family. PyrR subfamily.

It catalyses the reaction UMP + diphosphate = 5-phospho-alpha-D-ribose 1-diphosphate + uracil. Regulates the transcription of the pyrimidine nucleotide (pyr) operon in response to exogenous pyrimidines. In terms of biological role, also displays a weak uracil phosphoribosyltransferase activity which is not physiologically significant. The protein is Bifunctional protein PyrR of Elusimicrobium minutum (strain Pei191).